A 606-amino-acid polypeptide reads, in one-letter code: ATP-dependent RNA helicase DBP6 (606 aa).

2 disordered regions span residues 1–88 and 101–124; these read MFSQ…PEVD and KFKQ…EDAN. Composition is skewed to acidic residues over residues 35–71, 78–88, and 109–124; these read DESS…EDED, NMEIDSQPEVD, and ETIE…EDAN. The Q motif signature appears at 169 to 197; the sequence is KAFTDFKSSSFMIKNLEKMGFTEAFSVQI. Residues 211 to 393 enclose the Helicase ATP-binding domain; it reads KLKPDRVGDI…SLKFYNPRLI (183 aa). 224-231 contributes to the ATP binding site; that stretch reads ASTGSGKT. Residues 331-334 carry the DEAD box motif; it reads DEAD. The Helicase C-terminal domain occupies 430-585; the sequence is ILTKFLISTN…NVDLNVKELI (156 aa).

It belongs to the DEAD box helicase family. DDX51/DBP6 subfamily. Associated with pre-ribosomal particles.

It is found in the nucleus. The protein resides in the nucleolus. It catalyses the reaction ATP + H2O = ADP + phosphate + H(+). Its function is as follows. ATP-binding RNA helicase involved in the biogenesis of 60S ribosomal subunits and is required for the normal formation of 25S and 5.8S rRNAs. The sequence is that of ATP-dependent RNA helicase DBP6 (DBP6) from Candida albicans (strain SC5314 / ATCC MYA-2876) (Yeast).